We begin with the raw amino-acid sequence, 504 residues long: Deoxyguanosinetriphosphate triphosphohydrolase (504 aa).

Positions Arg-66–Cys-273 constitute an HD domain.

The protein belongs to the dGTPase family. Type 1 subfamily. Homotetramer. Mg(2+) is required as a cofactor.

It carries out the reaction dGTP + H2O = 2'-deoxyguanosine + triphosphate + H(+). DGTPase preferentially hydrolyzes dGTP over the other canonical NTPs. The sequence is that of Deoxyguanosinetriphosphate triphosphohydrolase from Klebsiella pneumoniae (strain 342).